A 981-amino-acid chain; its full sequence is Ubiquitin carboxyl-terminal hydrolase 37 (981 aa).

The KEN box 1 motif lies at 32–34; the sequence is KEN. 2 consecutive short sequence motifs (D-box) follow at residues 71-79 and 96-105; these read RLMLTLQDN and RLFLDAVHQN. The segment at 111–308 is disordered; it reads MKPSQGSGSF…SAKRSLGFLP (198 aa). Position 114 is a phosphoserine (Ser-114). Over residues 135-148 the composition is skewed to polar residues; the sequence is RQLSYSDNQASSKR. Residues 149 to 159 are compositionally biased toward basic and acidic residues; sequence GSLETKDDIPF. The D-box 3 signature appears at 160–168; that stretch reads RKVLGNPGR. Phosphoserine is present on Ser-170. Residues 172-195 show a composition bias toward polar residues; the sequence is KTATGSGITVTRTIPSLTSASTPL. Ser-212 carries the post-translational modification Phosphoserine. The KEN box 2 motif lies at 223–225; sequence KEN. Basic and acidic residues predominate over residues 245–259; that stretch reads SREKQLSLKQSEENR. Polar residues predominate over residues 266-300; it reads LQSSSFYGSRTGSKDYSSGSTNLDRTNVSGQTPSA. Residues 343-953 enclose the USP domain; it reads QGFSNLGNTC…SGYIFFYMHK (611 aa). Cys-352 functions as the Nucleophile in the catalytic mechanism. Ser-630 is subject to Phosphoserine; by CDK2. Phosphoserine occurs at positions 652 and 654. 2 disordered regions span residues 673 to 704 and 719 to 831; these read GCEQ…GFDG and KREA…EQKE. 2 stretches are compositionally biased toward basic and acidic residues: residues 683–697 and 719–734; these read KDSK…KSEL and KREA…DDKP. The region spanning 706–725 is the UIM 1 domain; it reads SEEELLAAVLEMSKREASPT. At Ser-772 the chain carries Phosphoserine. Basic and acidic residues predominate over residues 776 to 788; that stretch reads ITKDCDENKENKT. Residues 784–786 carry the KEN box 3 motif; it reads KEN. 2 UIM domains span residues 808–827 and 830–849; these read REEQ…QEAW and KEDD…FNNS. Low complexity predominate over residues 813–824; that stretch reads LQQALAQSLQEQ. The Proton acceptor role is filled by His-908.

The protein belongs to the peptidase C19 family. As to quaternary structure, interacts with FZR1/CDH1. Interacts with CDT1. In terms of processing, polyubiquitinated via 'Lys-11'-linked ubiquitin by the APC(CDH1) complex during late mitosis, leading to its degradation. Able to mediate auto-deubiquitination. Phosphorylated at Ser-630 by CDK2 during G1/S phase but not during mitosis; phosphorylation at Ser-630 is required for deubiquitinase activity. Also polyubiquitinated during early G1 phase, without leading to degradation. Phosphorylated at Ser-114 by ATM following DNA damage, which in turn increases its deubiquitination activity towards BLM.

Its subcellular location is the nucleus. The protein resides in the chromosome. It carries out the reaction Thiol-dependent hydrolysis of ester, thioester, amide, peptide and isopeptide bonds formed by the C-terminal Gly of ubiquitin (a 76-residue protein attached to proteins as an intracellular targeting signal).. Functionally, deubiquitinase that plays a role in different processes including cell cycle regulation, DNA replication or DNA damage response. Antagonizes the anaphase-promoting complex (APC/C) during G1/S transition by mediating deubiquitination of cyclin-A (CCNA1 and CCNA2), thereby promoting S phase entry. Specifically mediates deubiquitination of 'Lys-11'-linked polyubiquitin chains, a specific ubiquitin-linkage type mediated by the APC/C complex. Phosphorylation at Ser-628 during G1/S phase maximizes the deubiquitinase activity, leading to prevent degradation of cyclin-A (CCNA1 and CCNA2). Plays an important role in the regulation of DNA replication by stabilizing the licensing factor CDT1. Also plays an essential role beyond S-phase entry to promote the efficiency and fidelity of replication by deubiquitinating checkpoint kinase 1/CHK1, promoting its stability. Sustains the DNA damage response (DDR) by deubiquitinating and stabilizing the ATP-dependent DNA helicase BLM. Mechanistically, DNA double-strand breaks (DSB) promotes ATM-mediated phosphorylation of USP37 and enhances the binding between USP37 and BLM. Promotes cell migration by deubiquitinating and stabilizing the epithelial-mesenchymal transition (EMT)-inducing transcription factor SNAI. Plays a role in the regulation of mitotic spindle assembly and mitotic progression by associating with chromatin-associated WAPL and stabilizing it through deubiquitination. The chain is Ubiquitin carboxyl-terminal hydrolase 37 (USP37) from Canis lupus familiaris (Dog).